The chain runs to 321 residues: L-carnitine dehydrogenase (321 aa).

14–19 (GSGVIG) contacts NAD(+). The interval 317 to 321 (MTFSE) is important for catalytic activity.

It belongs to the 3-hydroxyacyl-CoA dehydrogenase family. L-carnitine dehydrogenase subfamily. As to quaternary structure, homodimer.

The protein resides in the cytoplasm. It catalyses the reaction carnitine + NAD(+) = 3-dehydrocarnitine + NADH + H(+). The protein operates within amine and polyamine metabolism; carnitine metabolism. With respect to regulation, the enzyme activity is strongly inhibited by Ag(+), Ni(+), Hg(+), and p-chloromercuribenzoate, and partially inhibited by Li(+), Ca(2+), Mn(2+), Co(2+), Cu(2+), and Zn(2+). Its function is as follows. Catalyzes the NAD(+)-dependent oxidation of L-carnitine to 3-dehydrocarnitine. Is specific for L-carnitine and NAD(+) as substrates since D-carnitine, other carnitine analogs such as choline and betaine, and NADP(+) are not substrates. Despite a high similarity to 3-hydroxyacyl-CoA dehydrogenases, cannot dehydrogenate 3-hydroxybutylate and 3-hydroxybutyl-CoA. Is probably involved in a L-carnitine degradation pathway that allows Pseudomonas sp. strain NBRC 13558 to grow on L-carnitine as the sole source of carbon and nitrogen. This chain is L-carnitine dehydrogenase, found in Pseudomonas sp.